Consider the following 798-residue polypeptide: ABC transporter G family member 4 (798 aa).

The interval 1–51 (MEDIGNNNFEIIDDKSDEKNDENFEDKNSRNNINEEQILSNQQQQQQQQQQ) is disordered. Basic and acidic residues predominate over residues 12–29 (IDDKSDEKNDENFEDKNS). Over residues 30–41 (RNNINEEQILSN) the composition is skewed to polar residues. A coiled-coil region spans residues 34 to 83 (NEEQILSNQQQQQQQQQQQQQQQQQQQQQQQQQQQQQQEQQQFKNEVINT). Positions 42–51 (QQQQQQQQQQ) are enriched in low complexity. Residues 211–464 (IDIEDIESQV…SIDSNYKCPP (254 aa)) form the ABC transporter domain. 253–260 (GPSGSGKS) lines the ATP pocket. Transmembrane regions (helical) follow at residues 540 to 560 (VVFFSKIVIAILIGLLFSACF), 579 to 599 (LFFFIITSLNLLPYSSISTFV), 628 to 648 (IVSSFFVVLIITTIIYCIVHL), 656 to 676 (ILSLISFYMVFLASVFMVIAM), 687 to 707 (FSYCTGVSVVLVLFSGFLVPI), 713 to 733 (SFGWIHHIDYLFYGFSSIVII), and 771 to 791 (SIGILTIWIAFFYILAYIGLY). The ABC transmembrane type-2 domain maps to 540-793 (VVFFSKIVIA…ILAYIGLYKF (254 aa)).

It belongs to the ABC transporter superfamily. ABCG family. Eye pigment precursor importer (TC 3.A.1.204) subfamily.

It is found in the membrane. This is ABC transporter G family member 4 (abcG4) from Dictyostelium discoideum (Social amoeba).